The primary structure comprises 321 residues: Phospholipid phosphatase-related protein type 5 (321 aa).

A run of 6 helical transmembrane segments spans residues 10–30 (SSML…AYYF), 62–82 (AVPP…VIIV), 122–142 (FLGI…AGQV), 196–213 (AALS…ITNT), 225–245 (VLCL…VAEY), and 252–272 (VIAG…CVVN).

It belongs to the PA-phosphatase related phosphoesterase family. Isoform 1 is expressed in brain, lung, kidney and colon. Isoform 2 is expressed in placenta, skeletal muscle and kidney.

The protein localises to the cell membrane. In terms of biological role, induces filopodia formation and promotes neurite growth in a CDC42-independent manner; impedes neurite growth inhibitory-mediated axonal retraction. The protein is Phospholipid phosphatase-related protein type 5 of Homo sapiens (Human).